The primary structure comprises 938 residues: Isoleucine--tRNA ligase (938 aa).

The short motif at proline 58–histidine 68 is the 'HIGH' region element. Position 183 is an N6-acetyllysine (lysine 183). Position 561 (glutamate 561) interacts with L-isoleucyl-5'-AMP. The 'KMSKS' region motif lies at lysine 602 to serine 606. Position 605 (lysine 605) interacts with ATP. Zn(2+) contacts are provided by cysteine 901, cysteine 904, cysteine 921, and cysteine 924.

Belongs to the class-I aminoacyl-tRNA synthetase family. IleS type 1 subfamily. As to quaternary structure, monomer. The cofactor is Zn(2+).

The protein resides in the cytoplasm. It catalyses the reaction tRNA(Ile) + L-isoleucine + ATP = L-isoleucyl-tRNA(Ile) + AMP + diphosphate. Functionally, catalyzes the attachment of isoleucine to tRNA(Ile). As IleRS can inadvertently accommodate and process structurally similar amino acids such as valine, to avoid such errors it has two additional distinct tRNA(Ile)-dependent editing activities. One activity is designated as 'pretransfer' editing and involves the hydrolysis of activated Val-AMP. The other activity is designated 'posttransfer' editing and involves deacylation of mischarged Val-tRNA(Ile). This Escherichia coli O45:K1 (strain S88 / ExPEC) protein is Isoleucine--tRNA ligase.